The sequence spans 469 residues: 3-isopropylmalate dehydratase large subunit (469 aa).

[4Fe-4S] cluster is bound by residues C347, C410, and C413.

The protein belongs to the aconitase/IPM isomerase family. LeuC type 1 subfamily. As to quaternary structure, heterodimer of LeuC and LeuD. Requires [4Fe-4S] cluster as cofactor.

The enzyme catalyses (2R,3S)-3-isopropylmalate = (2S)-2-isopropylmalate. It participates in amino-acid biosynthesis; L-leucine biosynthesis; L-leucine from 3-methyl-2-oxobutanoate: step 2/4. In terms of biological role, catalyzes the isomerization between 2-isopropylmalate and 3-isopropylmalate, via the formation of 2-isopropylmaleate. The chain is 3-isopropylmalate dehydratase large subunit from Cupriavidus pinatubonensis (strain JMP 134 / LMG 1197) (Cupriavidus necator (strain JMP 134)).